Here is a 160-residue protein sequence, read N- to C-terminus: RxLR effector protein PexRD44 (160 aa).

The signal sequence occupies residues 1–21 (MRLLLWVLISMLSIALSSCAA). The short motif at 54 to 76 (RFLRGESSKIVNLKQEEGVFEER) is the RxLR-dEER element.

Belongs to the RxLR effector family.

It is found in the secreted. The protein resides in the host cell membrane. It localises to the host nucleus. The protein localises to the host nucleolus. Effector that is involved in host plant infection. Contributes to virulence during the early infection stage, by inhibiting plant defense responses induced by both PAMP-triggered immunity (PTI) and effector-triggered immunity (ETI). The protein is RxLR effector protein PexRD44 of Phytophthora infestans (strain T30-4) (Potato late blight agent).